Here is a 341-residue protein sequence, read N- to C-terminus: Solute carrier family 25 member 43 (341 aa).

Solcar repeat units lie at residues 11–101 (TGGQ…TDDL), 105–185 (SQWS…LLVY), and 200–298 (SLPQ…LYQN). 6 helical membrane passes run 16–36 (LLCAGLAGTLSLSLTAPLELA), 68–88 (LWKGNAVACLRLFPCSAVQLA), 110–130 (IMAGSLAGMVSTIVTYPTDLI), 166–186 (GVSLTVVGALPFSAGSLLVYM), 205–225 (FANVCLAAAVTQTLSFPFETV), and 262–282 (VLGLWNGLTANLLKIVPYFGI).

This sequence belongs to the mitochondrial carrier (TC 2.A.29) family.

The protein localises to the mitochondrion inner membrane. The sequence is that of Solute carrier family 25 member 43 (SLC25A43) from Homo sapiens (Human).